A 221-amino-acid polypeptide reads, in one-letter code: PKHD-type hydroxylase PMN2A_0775 (221 aa).

Residues 80–174 (LIHGVMFTQS…RHVCVGWIQS (95 aa)) enclose the Fe2OG dioxygenase domain. Residues His-98, Asp-100, and His-155 each contribute to the Fe cation site. Arg-165 is a binding site for 2-oxoglutarate.

The cofactor is Fe(2+). Requires L-ascorbate as cofactor.

The sequence is that of PKHD-type hydroxylase PMN2A_0775 from Prochlorococcus marinus (strain NATL2A).